The sequence spans 66 residues: Large ribosomal subunit protein bL31 (66 aa).

The Zn(2+) site is built by C16, C18, C36, and C39.

It belongs to the bacterial ribosomal protein bL31 family. Type A subfamily. As to quaternary structure, part of the 50S ribosomal subunit. Zn(2+) is required as a cofactor.

Binds the 23S rRNA. In Sulfurovum sp. (strain NBC37-1), this protein is Large ribosomal subunit protein bL31.